A 247-amino-acid polypeptide reads, in one-letter code: Segregation and condensation protein A (247 aa).

Belongs to the ScpA family. In terms of assembly, component of a cohesin-like complex composed of ScpA, ScpB and the Smc homodimer, in which ScpA and ScpB bind to the head domain of Smc. The presence of the three proteins is required for the association of the complex with DNA.

It is found in the cytoplasm. Its function is as follows. Participates in chromosomal partition during cell division. May act via the formation of a condensin-like complex containing Smc and ScpB that pull DNA away from mid-cell into both cell halves. This is Segregation and condensation protein A from Lactobacillus gasseri (strain ATCC 33323 / DSM 20243 / BCRC 14619 / CIP 102991 / JCM 1131 / KCTC 3163 / NCIMB 11718 / NCTC 13722 / AM63).